A 245-amino-acid chain; its full sequence is Glucan endo-1,3-beta-glucosidase (245 aa).

The N-terminal stretch at 1–23 (MMKTLVVVLSLSLTILSFGGAHA) is a signal peptide. Intrachain disulfides connect cysteine 32/cysteine 244, cysteine 80/cysteine 90, cysteine 95/cysteine 102, cysteine 150/cysteine 233, cysteine 155/cysteine 216, cysteine 163/cysteine 179, cysteine 183/cysteine 192, and cysteine 193/cysteine 203.

The protein belongs to the thaumatin family. In terms of tissue distribution, abundantly expressed in ripening fruit.

Its subcellular location is the secreted. The catalysed reaction is Hydrolysis of (1-&gt;3)-beta-D-glucosidic linkages in (1-&gt;3)-beta-D-glucans.. The chain is Glucan endo-1,3-beta-glucosidase from Prunus avium (Cherry).